The chain runs to 80 residues: U20-ctenitoxin-Pn1a (80 aa).

7 disulfides stabilise this stretch: Cys3-Cys20, Cys10-Cys26, Cys17-Cys52, Cys19-Cys40, Cys28-Cys38, Cys58-Cys71, and Cys75-Cys80.

In terms of tissue distribution, expressed by the venom gland.

Its subcellular location is the secreted. In terms of biological role, omega-agatoxin are antagonists of voltage-gated calcium channels (Cav). Induces rapid general flaccid paralysis followed by death when injected into the cerebral ventricle of mice at dose levels of 3 ug per mouse. The sequence is that of U20-ctenitoxin-Pn1a from Phoneutria nigriventer (Brazilian armed spider).